Here is a 1006-residue protein sequence, read N- to C-terminus: Zinc finger protein ZFPM1 (1006 aa).

Positions 1 to 13 (MSRRKQSNPRQIK) are enriched in basic residues. Disordered regions lie at residues 1–93 (MSRR…DELE) and 114–133 (SWGP…RQAE). Residues 15–25 (SLGDMEAREEV) are compositionally biased toward basic and acidic residues. Residues 42–62 (APSPPSADVNSPPPLPPPTSP) show a composition bias toward pro residues. A compositionally biased stretch (basic and acidic residues) spans 66–79 (KELEGQEPEPRPTE). Phosphoserine is present on residues Ser-84 and Ser-128. A compositionally biased stretch (polar residues) spans 121–130 (SVQTRASSPR). The CCHC FOG-type 1 zinc-finger motif lies at 235 to 268 (VINKDVFPCKDCGIWYRSERNLQAHLLYYCASRQ). Residues Cys-243, Cys-246, His-259, and Cys-264 each coordinate Zn(2+). Ser-272 is modified (phosphoserine). 3 consecutive C2H2-type zinc fingers follow at residues 290–314 (RVCP…MRSH), 320–342 (FVCL…LKVH), and 348–371 (GVCH…VTNH). Positions 330 to 341 (TTKANCERHLKV) are interaction with TACC3. Ser-384 carries the post-translational modification Phosphoserine. 3 disordered regions span residues 384-409 (SPGA…HTAL), 438-460 (NGEA…AAPR), and 473-515 (APIL…SPVP). A compositionally biased stretch (low complexity) spans 485 to 515 (APSRTPSPRSPAPARVKAELSSPTPGSSPVP). A phosphoserine mark is found at Ser-491 and Ser-494. The segment at 571 to 604 (PGAPKGATCFECEITFSNVNNYYVHKRLYCSGRR) adopts a CCHC FOG-type 2 zinc-finger fold. Residues Cys-579, Cys-582, His-595, and Cys-600 each contribute to the Zn(2+) site. Positions 605-681 (APEDAPAARR…SVDDAEDDPS (77 aa)) are disordered. Residues 617 to 629 (APPGPARAPPGQP) show a composition bias toward pro residues. Residues Ser-638 and Ser-671 each carry the phosphoserine modification. A CCHC FOG-type 3 zinc finger spans residues 677-710 (EDDPSRTLCEACNIRFSRHETYTVHKRYYCASRH). Positions 685, 688, 701, and 706 each coordinate Zn(2+). Positions 708-810 (SRHDPPPRRP…PRRPLPGAPA (103 aa)) are disordered. Pro residues-rich tracts occupy residues 715–735 (RRPA…PSPA) and 754–769 (APPP…PESP). The span at 780-791 (GLAPARSPGPAA) shows a compositional bias: low complexity. Ser-786 is subject to Phosphoserine. An interaction with CTBP2 region spans residues 794–800 (PIDLSKK). The CCHC FOG-type 4 zinc-finger motif lies at 811–844 (PALADYHECTACRVSFHSLEAYLAHKKYSCPAAP). 4 residues coordinate Zn(2+): Cys-819, Cys-822, His-835, and Cys-840. The C2H2-type 4 zinc-finger motif lies at 854–877 (AACPYCPPNGPVRGDLLEHFRLAH). The segment at 889 to 971 (GVEARTPADR…KGTPAPLPNG (83 aa)) is disordered. Ser-901, Ser-909, Ser-914, and Ser-935 each carry phosphoserine. Positions 925-950 (PQEPPPGPPPSPAAAPEAVPPPPAPP) are enriched in pro residues. The CCHC FOG-type 5 zinc-finger motif lies at 968–1001 (LPNGNHRYCRLCNIKFSSLSTFIAHKKYYCSSHA). The Zn(2+) site is built by Cys-976, Cys-979, His-992, and Cys-997.

This sequence belongs to the FOG (Friend of GATA) family. Interacts with corepressor CTBP2; this interaction is however not essential for corepressor activity. Interacts with the N-terminal zinc-finger of GATA1, GATA2 and probably GATA3. In terms of tissue distribution, mainly expressed in hematopoietic tissues. Also expressed in adult cerebellum, stomach, lymph node, liver and pancreas. Expressed in fetal heart, liver and spleen.

It is found in the nucleus. Its function is as follows. Transcription regulator that plays an essential role in erythroid and megakaryocytic cell differentiation. Essential cofactor that acts via the formation of a heterodimer with transcription factors of the GATA family GATA1, GATA2 and GATA3. Such heterodimer can both activate or repress transcriptional activity, depending on the cell and promoter context. The heterodimer formed with GATA proteins is essential to activate expression of genes such as NFE2, ITGA2B, alpha- and beta-globin, while it represses expression of KLF1. May be involved in regulation of some genes in gonads. May also be involved in cardiac development, in a non-redundant way with ZFPM2/FOG2. The polypeptide is Zinc finger protein ZFPM1 (ZFPM1) (Homo sapiens (Human)).